The primary structure comprises 178 residues: Oligoribonuclease (178 aa).

Residues 7–168 (LIWIDLEMTG…DDIRESIAEL (162 aa)) form the Exonuclease domain. Tyr-128 is an active-site residue.

This sequence belongs to the oligoribonuclease family.

It localises to the cytoplasm. Functionally, 3'-to-5' exoribonuclease specific for small oligoribonucleotides. The chain is Oligoribonuclease from Francisella tularensis subsp. tularensis (strain FSC 198).